The chain runs to 242 residues: Ribonuclease PH (242 aa).

Residues Arg86 and 124–126 (GTR) each bind phosphate.

This sequence belongs to the RNase PH family. In terms of assembly, homohexameric ring arranged as a trimer of dimers.

The catalysed reaction is tRNA(n+1) + phosphate = tRNA(n) + a ribonucleoside 5'-diphosphate. Phosphorolytic 3'-5' exoribonuclease that plays an important role in tRNA 3'-end maturation. Removes nucleotide residues following the 3'-CCA terminus of tRNAs; can also add nucleotides to the ends of RNA molecules by using nucleoside diphosphates as substrates, but this may not be physiologically important. Probably plays a role in initiation of 16S rRNA degradation (leading to ribosome degradation) during starvation. The protein is Ribonuclease PH of Photorhabdus laumondii subsp. laumondii (strain DSM 15139 / CIP 105565 / TT01) (Photorhabdus luminescens subsp. laumondii).